The sequence spans 238 residues: Zinc import ATP-binding protein ZnuC (238 aa).

An ABC transporter domain is found at 5–220 (ITLKNIHVSF…LEFISIFGLK (216 aa)). 37-44 (GPNGAGKS) is a binding site for ATP.

It belongs to the ABC transporter superfamily. Zinc importer (TC 3.A.1.15.5) family. The complex is composed of two ATP-binding proteins (ZnuC), two transmembrane proteins (ZnuB) and a solute-binding protein (ZnuA).

It localises to the cell inner membrane. The enzyme catalyses Zn(2+)(out) + ATP(in) + H2O(in) = Zn(2+)(in) + ADP(in) + phosphate(in) + H(+)(in). Part of the ABC transporter complex ZnuABC involved in zinc import. Responsible for energy coupling to the transport system. This chain is Zinc import ATP-binding protein ZnuC, found in Buchnera aphidicola subsp. Schizaphis graminum (strain Sg).